Consider the following 328-residue polypeptide: Tetraacyldisaccharide 4'-kinase (328 aa).

Position 55-62 (55-62 (TAGGNGKT)) interacts with ATP.

This sequence belongs to the LpxK family.

The enzyme catalyses a lipid A disaccharide + ATP = a lipid IVA + ADP + H(+). It functions in the pathway glycolipid biosynthesis; lipid IV(A) biosynthesis; lipid IV(A) from (3R)-3-hydroxytetradecanoyl-[acyl-carrier-protein] and UDP-N-acetyl-alpha-D-glucosamine: step 6/6. Its function is as follows. Transfers the gamma-phosphate of ATP to the 4'-position of a tetraacyldisaccharide 1-phosphate intermediate (termed DS-1-P) to form tetraacyldisaccharide 1,4'-bis-phosphate (lipid IVA). The chain is Tetraacyldisaccharide 4'-kinase from Escherichia coli O139:H28 (strain E24377A / ETEC).